The chain runs to 360 residues: Phospho-N-acetylmuramoyl-pentapeptide-transferase (360 aa).

The next 10 helical transmembrane spans lie at 27 to 47 (GAIATALFFVFFFGPNIIKSL), 72 to 92 (TPTMGGLMILSGLFVSTLLWA), 94 to 114 (LSNHYVWVVLWVMLGYGAIGF), 135 to 155 (LACEAGVALVACIAMMKLGTP), 167 to 187 (GYVVDLGLFFLIFGPFVIVAS), 199 to 219 (GLAIVPVMIAAGTFGIIAYLV), 236 to 256 (AGELAVVSGAVIGAGLGFLWF), 263 to 283 (IFMGDTGSLALGGLLGTIAVA), 289 to 309 (VLAIVGGLFALETLSVIVQVV), and 337 to 357 (QVVVRFWIIAFVLALVGLSTL).

It belongs to the glycosyltransferase 4 family. MraY subfamily. It depends on Mg(2+) as a cofactor.

The protein localises to the cell inner membrane. It carries out the reaction UDP-N-acetyl-alpha-D-muramoyl-L-alanyl-gamma-D-glutamyl-meso-2,6-diaminopimeloyl-D-alanyl-D-alanine + di-trans,octa-cis-undecaprenyl phosphate = di-trans,octa-cis-undecaprenyl diphospho-N-acetyl-alpha-D-muramoyl-L-alanyl-D-glutamyl-meso-2,6-diaminopimeloyl-D-alanyl-D-alanine + UMP. It participates in cell wall biogenesis; peptidoglycan biosynthesis. Functionally, catalyzes the initial step of the lipid cycle reactions in the biosynthesis of the cell wall peptidoglycan: transfers peptidoglycan precursor phospho-MurNAc-pentapeptide from UDP-MurNAc-pentapeptide onto the lipid carrier undecaprenyl phosphate, yielding undecaprenyl-pyrophosphoryl-MurNAc-pentapeptide, known as lipid I. The chain is Phospho-N-acetylmuramoyl-pentapeptide-transferase from Beijerinckia indica subsp. indica (strain ATCC 9039 / DSM 1715 / NCIMB 8712).